The primary structure comprises 719 residues: Probable 1-deoxy-D-xylulose-5-phosphate synthase, chloroplastic (719 aa).

The transit peptide at 1–57 directs the protein to the chloroplast; sequence MALCAYAFPGILNRTVAVASDASKPTPLFSEWIHGTDLQFQFHQKLTQVKKRSRTVQ. Residues histidine 145 and 186-188 each bind thiamine diphosphate; that span reads GHS. Residue aspartate 217 coordinates Mg(2+). Residues 218–219, asparagine 246, tyrosine 367, and glutamate 449 each bind thiamine diphosphate; that span reads GA. Mg(2+) is bound at residue asparagine 246.

This sequence belongs to the transketolase family. DXPS subfamily. As to quaternary structure, homodimer. The cofactor is Mg(2+). Thiamine diphosphate is required as a cofactor.

It is found in the plastid. It localises to the chloroplast. It catalyses the reaction D-glyceraldehyde 3-phosphate + pyruvate + H(+) = 1-deoxy-D-xylulose 5-phosphate + CO2. It participates in metabolic intermediate biosynthesis; 1-deoxy-D-xylulose 5-phosphate biosynthesis; 1-deoxy-D-xylulose 5-phosphate from D-glyceraldehyde 3-phosphate and pyruvate: step 1/1. Its function is as follows. Catalyzes the acyloin condensation reaction between C atoms 2 and 3 of pyruvate and glyceraldehyde 3-phosphate to yield 1-deoxy-D-xylulose-5-phosphate (DXP). The sequence is that of Probable 1-deoxy-D-xylulose-5-phosphate synthase, chloroplastic (TKT2) from Capsicum annuum (Capsicum pepper).